Reading from the N-terminus, the 37-residue chain is Large ribosomal subunit protein bL36 (37 aa).

This sequence belongs to the bacterial ribosomal protein bL36 family.

The sequence is that of Large ribosomal subunit protein bL36 from Cutibacterium acnes (strain DSM 16379 / KPA171202) (Propionibacterium acnes).